Here is a 380-residue protein sequence, read N- to C-terminus: 2-aminoethylphosphonate--pyruvate transaminase (380 aa).

Lysine 204 bears the N6-(pyridoxal phosphate)lysine mark.

It belongs to the class-V pyridoxal-phosphate-dependent aminotransferase family. PhnW subfamily. Homodimer. Requires pyridoxal 5'-phosphate as cofactor.

The catalysed reaction is (2-aminoethyl)phosphonate + pyruvate = phosphonoacetaldehyde + L-alanine. Functionally, involved in phosphonate degradation. The polypeptide is 2-aminoethylphosphonate--pyruvate transaminase (Aeromonas hydrophila subsp. hydrophila (strain ATCC 7966 / DSM 30187 / BCRC 13018 / CCUG 14551 / JCM 1027 / KCTC 2358 / NCIMB 9240 / NCTC 8049)).